Consider the following 151-residue polypeptide: Gametocyte-specific factor 1-like (151 aa).

CHHC U11-48K-type zinc fingers lie at residues 6–33 (IEIC…RKKN) and 40–67 (MASC…VNRS). Residues Cys-9, His-15, His-25, Cys-29, Cys-43, His-49, His-59, and Cys-63 each coordinate Zn(2+). The segment at 130–151 (QESRGGDQCPEDPQTRTRKANF) is disordered.

It belongs to the UPF0224 (FAM112) family.

This Mus musculus (Mouse) protein is Gametocyte-specific factor 1-like (Gtsf1l).